Here is a 355-residue protein sequence, read N- to C-terminus: Peptide chain release factor 1 (355 aa).

Gln233 carries the post-translational modification N5-methylglutamine.

It belongs to the prokaryotic/mitochondrial release factor family. Post-translationally, methylated by PrmC. Methylation increases the termination efficiency of RF1.

The protein localises to the cytoplasm. Functionally, peptide chain release factor 1 directs the termination of translation in response to the peptide chain termination codons UAG and UAA. The chain is Peptide chain release factor 1 from Desulfitobacterium hafniense (strain DSM 10664 / DCB-2).